A 370-amino-acid chain; its full sequence is Cytochrome b (370 aa).

4 consecutive transmembrane segments (helical) span residues 25 to 45, 69 to 90, 105 to 125, and 170 to 190; these read FGSM…FLAV, WLMQ…YIHI, WLSG…GYVL, and FFAL…LHIL. Heme b contacts are provided by His-75 and His-89. Heme b contacts are provided by His-174 and His-188. His-193 contributes to the a ubiquinone binding site. 4 consecutive transmembrane segments (helical) span residues 218 to 238, 280 to 300, 312 to 332, and 339 to 358; these read YKDL…VSFF, LGGA…PFTH, LMQL…WSST, and FTTI…ISKP.

This sequence belongs to the cytochrome b family. As to quaternary structure, the cytochrome bc1 complex contains 3 respiratory subunits (MT-CYB, CYC1 and UQCRFS1), 2 core proteins (UQCRC1 and UQCRC2) and probably 6 low-molecular weight proteins. Heme b serves as cofactor.

Its subcellular location is the mitochondrion inner membrane. In terms of biological role, component of the ubiquinol-cytochrome c reductase complex (complex III or cytochrome b-c1 complex) that is part of the mitochondrial respiratory chain. The b-c1 complex mediates electron transfer from ubiquinol to cytochrome c. Contributes to the generation of a proton gradient across the mitochondrial membrane that is then used for ATP synthesis. The protein is Cytochrome b (MT-CYB) of Chilabothrus subflavus (Jamaican yellow boa).